The primary structure comprises 354 residues: UDP-N-acetylglucosamine--N-acetylmuramyl-(pentapeptide) pyrophosphoryl-undecaprenol N-acetylglucosamine transferase (354 aa).

Residues 13-15 (SGG), N125, R161, S189, I242, 261-266 (ALTVSE), and Q286 contribute to the UDP-N-acetyl-alpha-D-glucosamine site.

This sequence belongs to the glycosyltransferase 28 family. MurG subfamily.

Its subcellular location is the cell inner membrane. It catalyses the reaction di-trans,octa-cis-undecaprenyl diphospho-N-acetyl-alpha-D-muramoyl-L-alanyl-D-glutamyl-meso-2,6-diaminopimeloyl-D-alanyl-D-alanine + UDP-N-acetyl-alpha-D-glucosamine = di-trans,octa-cis-undecaprenyl diphospho-[N-acetyl-alpha-D-glucosaminyl-(1-&gt;4)]-N-acetyl-alpha-D-muramoyl-L-alanyl-D-glutamyl-meso-2,6-diaminopimeloyl-D-alanyl-D-alanine + UDP + H(+). The protein operates within cell wall biogenesis; peptidoglycan biosynthesis. Cell wall formation. Catalyzes the transfer of a GlcNAc subunit on undecaprenyl-pyrophosphoryl-MurNAc-pentapeptide (lipid intermediate I) to form undecaprenyl-pyrophosphoryl-MurNAc-(pentapeptide)GlcNAc (lipid intermediate II). The sequence is that of UDP-N-acetylglucosamine--N-acetylmuramyl-(pentapeptide) pyrophosphoryl-undecaprenol N-acetylglucosamine transferase from Buchnera aphidicola subsp. Schizaphis graminum (strain Sg).